Reading from the N-terminus, the 234-residue chain is Leucyl/phenylalanyl-tRNA--protein transferase (234 aa).

The protein belongs to the L/F-transferase family.

Its subcellular location is the cytoplasm. The enzyme catalyses N-terminal L-lysyl-[protein] + L-leucyl-tRNA(Leu) = N-terminal L-leucyl-L-lysyl-[protein] + tRNA(Leu) + H(+). The catalysed reaction is N-terminal L-arginyl-[protein] + L-leucyl-tRNA(Leu) = N-terminal L-leucyl-L-arginyl-[protein] + tRNA(Leu) + H(+). It catalyses the reaction L-phenylalanyl-tRNA(Phe) + an N-terminal L-alpha-aminoacyl-[protein] = an N-terminal L-phenylalanyl-L-alpha-aminoacyl-[protein] + tRNA(Phe). Functionally, functions in the N-end rule pathway of protein degradation where it conjugates Leu, Phe and, less efficiently, Met from aminoacyl-tRNAs to the N-termini of proteins containing an N-terminal arginine or lysine. The protein is Leucyl/phenylalanyl-tRNA--protein transferase of Pectobacterium atrosepticum (strain SCRI 1043 / ATCC BAA-672) (Erwinia carotovora subsp. atroseptica).